We begin with the raw amino-acid sequence, 527 residues long: Bifunctional purine biosynthesis protein PurH (527 aa).

The 149-residue stretch at 1-149 (MASDFLPVRR…KNFARVAVAA (149 aa)) folds into the MGS-like domain.

Belongs to the PurH family.

The enzyme catalyses (6R)-10-formyltetrahydrofolate + 5-amino-1-(5-phospho-beta-D-ribosyl)imidazole-4-carboxamide = 5-formamido-1-(5-phospho-D-ribosyl)imidazole-4-carboxamide + (6S)-5,6,7,8-tetrahydrofolate. It carries out the reaction IMP + H2O = 5-formamido-1-(5-phospho-D-ribosyl)imidazole-4-carboxamide. The protein operates within purine metabolism; IMP biosynthesis via de novo pathway; 5-formamido-1-(5-phospho-D-ribosyl)imidazole-4-carboxamide from 5-amino-1-(5-phospho-D-ribosyl)imidazole-4-carboxamide (10-formyl THF route): step 1/1. It functions in the pathway purine metabolism; IMP biosynthesis via de novo pathway; IMP from 5-formamido-1-(5-phospho-D-ribosyl)imidazole-4-carboxamide: step 1/1. This is Bifunctional purine biosynthesis protein PurH from Xanthomonas axonopodis pv. citri (strain 306).